The primary structure comprises 139 residues: Putative pre-16S rRNA nuclease (139 aa).

Belongs to the YqgF nuclease family.

Its subcellular location is the cytoplasm. In terms of biological role, could be a nuclease involved in processing of the 5'-end of pre-16S rRNA. The polypeptide is Putative pre-16S rRNA nuclease (Streptococcus thermophilus (strain CNRZ 1066)).